Here is a 305-residue protein sequence, read N- to C-terminus: Cytochrome c biogenesis protein CcsA (305 aa).

8 consecutive transmembrane segments (helical) span residues 11–31, 37–57, 63–83, 96–116, 141–161, 212–232, 246–263, and 275–295; these read GLGFGAFLLLLLALPLAFWAV, TGIVQLLVALANLLLTSQLVL, GHFPISNLYESLCFLAWACTL, IVAAAATPMGLGCIAFASFAL, VIMVSYAALLVGSLLSLAVLL, TITVGFLMLTVGIVSGAVWAN, TWALICWLVYAAYLHTRL, and VAVVGLVVIAVCYIGVNLLGI.

The protein belongs to the CcmF/CycK/Ccl1/NrfE/CcsA family. As to quaternary structure, may interact with ccs1.

The protein resides in the cellular thylakoid membrane. Required during biogenesis of c-type cytochromes (cytochrome c6 and cytochrome f) at the step of heme attachment. In Parasynechococcus marenigrum (strain WH8102), this protein is Cytochrome c biogenesis protein CcsA.